The chain runs to 573 residues: NADH-ubiquinone oxidoreductase chain 5 (573 aa).

16 consecutive transmembrane segments (helical) span residues 4 to 24, 44 to 64, 85 to 105, 106 to 126, 147 to 167, 170 to 190, 212 to 234, 239 to 259, 268 to 288, 294 to 314, 337 to 357, 377 to 396, 422 to 442, 452 to 472, 487 to 507, and 552 to 572; these read ISFI…LYYL, IVMT…VLMI, FIML…SPNL, VSIL…VIYF, VALL…YIFY, VMQN…AAMT, SALV…FNIV, WLGQ…GLGA, IIAL…SMGF, FHLL…GAII, SACF…AGFY, FLYF…LVYY, LGLL…IFPF, LKML…LISI, LTLF…GMIF, and LKIY…FLLF.

The protein belongs to the complex I subunit 5 family.

It is found in the mitochondrion inner membrane. It catalyses the reaction a ubiquinone + NADH + 5 H(+)(in) = a ubiquinol + NAD(+) + 4 H(+)(out). Core subunit of the mitochondrial membrane respiratory chain NADH dehydrogenase (Complex I) that is believed to belong to the minimal assembly required for catalysis. Complex I functions in the transfer of electrons from NADH to the respiratory chain. The immediate electron acceptor for the enzyme is believed to be ubiquinone. The sequence is that of NADH-ubiquinone oxidoreductase chain 5 (mt:ND5) from Drosophila yakuba (Fruit fly).